The primary structure comprises 729 residues: Fatty acid oxidation complex subunit alpha (729 aa).

The enoyl-CoA hydratase/isomerase stretch occupies residues 1 to 189 (MLYKGDTLYL…KIGLVDGVVA (189 aa)). Aspartate 296 is a binding site for substrate. The 3-hydroxyacyl-CoA dehydrogenase stretch occupies residues 311–729 (ETPKHAAVLG…ARPVGALKTA (419 aa)). NAD(+) contacts are provided by residues methionine 324, aspartate 343, 400–402 (VVE), lysine 407, and serine 429. Histidine 450 serves as the catalytic For 3-hydroxyacyl-CoA dehydrogenase activity. Position 453 (asparagine 453) interacts with NAD(+). The substrate site is built by asparagine 500 and tyrosine 660.

It in the N-terminal section; belongs to the enoyl-CoA hydratase/isomerase family. The protein in the C-terminal section; belongs to the 3-hydroxyacyl-CoA dehydrogenase family. As to quaternary structure, heterotetramer of two alpha chains (FadB) and two beta chains (FadA).

It catalyses the reaction a (3S)-3-hydroxyacyl-CoA + NAD(+) = a 3-oxoacyl-CoA + NADH + H(+). It carries out the reaction a (3S)-3-hydroxyacyl-CoA = a (2E)-enoyl-CoA + H2O. The enzyme catalyses a 4-saturated-(3S)-3-hydroxyacyl-CoA = a (3E)-enoyl-CoA + H2O. The catalysed reaction is (3S)-3-hydroxybutanoyl-CoA = (3R)-3-hydroxybutanoyl-CoA. It catalyses the reaction a (3Z)-enoyl-CoA = a 4-saturated (2E)-enoyl-CoA. It carries out the reaction a (3E)-enoyl-CoA = a 4-saturated (2E)-enoyl-CoA. The protein operates within lipid metabolism; fatty acid beta-oxidation. Functionally, involved in the aerobic and anaerobic degradation of long-chain fatty acids via beta-oxidation cycle. Catalyzes the formation of 3-oxoacyl-CoA from enoyl-CoA via L-3-hydroxyacyl-CoA. It can also use D-3-hydroxyacyl-CoA and cis-3-enoyl-CoA as substrate. This chain is Fatty acid oxidation complex subunit alpha, found in Klebsiella pneumoniae subsp. pneumoniae (strain ATCC 700721 / MGH 78578).